Here is a 182-residue protein sequence, read N- to C-terminus: Ribosome maturation factor RimM (182 aa).

Positions 103-182 (EDEFYWRELF…RIEVDWDPGF (80 aa)) constitute a PRC barrel domain.

Belongs to the RimM family. As to quaternary structure, binds ribosomal protein uS19.

It is found in the cytoplasm. An accessory protein needed during the final step in the assembly of 30S ribosomal subunit, possibly for assembly of the head region. Essential for efficient processing of 16S rRNA. May be needed both before and after RbfA during the maturation of 16S rRNA. It has affinity for free ribosomal 30S subunits but not for 70S ribosomes. This Vibrio parahaemolyticus serotype O3:K6 (strain RIMD 2210633) protein is Ribosome maturation factor RimM.